A 150-amino-acid polypeptide reads, in one-letter code: Putative biopolymer transport protein ExbB-like 2 (150 aa).

A run of 3 helical transmembrane segments spans residues 5-25 (VDYG…AIAI), 63-83 (APYI…MDLG), and 97-117 (LALA…AIVI).

The protein belongs to the ExbB/TolQ family.

The protein resides in the cell inner membrane. This Helicobacter pylori (strain J99 / ATCC 700824) (Campylobacter pylori J99) protein is Putative biopolymer transport protein ExbB-like 2.